The following is a 1341-amino-acid chain: Aldehyde oxidase 4 (1341 aa).

A 2Fe-2S ferredoxin-type domain is found at 8–95 (DELIFFVNGK…GAAVTTVEGV (88 aa)). [2Fe-2S] cluster-binding residues include cysteine 47, cysteine 52, cysteine 55, and cysteine 77. Residue glutamine 116 participates in Mo-molybdopterin binding. Cysteine 117, cysteine 120, cysteine 152, and cysteine 154 together coordinate [2Fe-2S] cluster. Cysteine 154 lines the Mo-molybdopterin pocket. One can recognise an FAD-binding PCMH-type domain in the interval 239 to 424 (FQGERTTWLA…LSVFIPYSSQ (186 aa)). FAD is bound by residues 267–274 (LIMGNTTV), alanine 348, threonine 357, histidine 361, aspartate 370, and valine 414. Mo-molybdopterin contacts are provided by residues alanine 805, 805–806 (AF), leucine 1046, 1087–1090 (GSMG), glutamine 1202, and leucine 1266. Residue glutamate 1268 is the Proton acceptor; for azaheterocycle hydroxylase activity of the active site.

It belongs to the xanthine dehydrogenase family. Homodimer. Requires [2Fe-2S] cluster as cofactor. FAD is required as a cofactor. Mo-molybdopterin serves as cofactor. As to expression, detected in liver, testis, kidney, brain, Harderian gland and olfactory mucosa.

The protein localises to the cytoplasm. The catalysed reaction is an aldehyde + O2 + H2O = a carboxylate + H2O2 + H(+). It carries out the reaction retinal + O2 + H2O = retinoate + H2O2 + H(+). Functionally, aldehyde oxidase able to catalyze the oxidation of retinaldehyde into retinoate. Acts as a negative modulator of the epidermal trophism. May be able to oxidize a wide variety of aldehydes into their corresponding carboxylates and to hydroxylate azaheterocycles. The sequence is that of Aldehyde oxidase 4 (AOX4) from Cavia porcellus (Guinea pig).